A 455-amino-acid chain; its full sequence is Neuronal acetylcholine receptor subunit beta-3 (455 aa).

A signal peptide spans 1-20; that stretch reads MLCLMLCVLCWSRSDVAALG. The Extracellular segment spans residues 21–229; it reads SVVENEDALL…VTYSFVLRRL (209 aa). Residues asparagine 48 and asparagine 163 are each glycosylated (N-linked (GlcNAc...) asparagine). Cysteine 150 and cysteine 164 are joined by a disulfide. A run of 3 helical transmembrane segments spans residues 230–254, 262–279, and 296–317; these read PLFYTLFLIIPCLGLSFLTVLVFYL, LSLSTSVLVSLTVFLLVI, and YLLFIMIFVTLSIIVTVFVINV. Residues 318–425 are Cytoplasmic-facing; that stretch reads HHRSSATYHP…WKFVAQVLDR (108 aa). Residues 426–444 traverse the membrane as a helical segment; that stretch reads IFLWLFLVVSVTGSVLIFT.

Belongs to the ligand-gated ion channel (TC 1.A.9) family. Acetylcholine receptor (TC 1.A.9.1) subfamily. Beta-3/CHRNB3 sub-subfamily. As to quaternary structure, neuronal AChR seems to be composed of two different type of subunits: alpha and beta. CHRNB3/beta-3 subunit is only able to form functional nAChRs when co-assembled with another beta subunit. Participates in pentameric assemblies along with CHRNA4/alpha-4 and CHRNB2/beta-2 subunits and with CHRNA6/alpha-6 as well, forming stoichiometries such as (CHRNA3:CHRNB4)2:CHRNB3, (CHRNA4:CHRNB2)2:CHRNB3 or (CHRNA6:CHRNB2)2:CHRNB3. In terms of tissue distribution, relatively abundant in the developing retina and in the trigeminal ganglion.

It localises to the synaptic cell membrane. The protein resides in the cell membrane. It catalyses the reaction Ca(2+)(in) = Ca(2+)(out). The catalysed reaction is K(+)(in) = K(+)(out). The enzyme catalyses Na(+)(in) = Na(+)(out). Its activity is regulated as follows. Activated by a myriad of ligands such as acetylcholine, cytisine, nicotine, choline and epibatidine. Component of neuronal acetylcholine receptors (nAChRs) that function as pentameric, ligand-gated cation channels with high calcium permeability among other activities. nAChRs are excitatory neurotrasnmitter receptors formed by a collection of nAChR subunits known to mediate synaptic transmission in the nervous system and the neuromuscular junction. Each nAchR subunit confers differential attributes to channel properties, including activation, deactivation and desensitization kinetics, pH sensitivity, cation permeability, and binding to allosteric modulators. Has an accessory rather than functional role and is only able to form functional nAChRs when co-assembled with another beta subunit. Participates in pentameric assemblies along with CHRNA3, CHRNA4, CHRNA6, CHRNB2 and CHRNB4. Modulates receptor assembly and increases receptor sensitivity to nicotine when associated with CHRNB2, CHRNA4 and/or CHRNA6 as well as CHRNA3 and CHRNB4. Seems to play a role in nicotine addiction. The chain is Neuronal acetylcholine receptor subunit beta-3 (CHRNB3) from Gallus gallus (Chicken).